A 216-amino-acid polypeptide reads, in one-letter code: MKYGIVGYSGRMGQEIQKVFSEKGHELVLKVDVNGVEELDSPDVVIDFSSPEALPKTVDLCKKYRAGLVLGTTALKEEHLQMLRELSKEVPVVQAYNFSIGINVLKRFLSELVKVLEDWDVEIVETHHRFKKDAPSGTAILLESALGKSVPIHSLRVGGVPGDHVVVFGNIGETIEIKHRAISRTVFAIGALKAAEFLVGKDPGMYSFEEVIFGGE.

NAD(+)-binding positions include 9 to 12 (SGRM), 71 to 73 (GTT), and 95 to 98 (AYNF). His127 serves as the catalytic Proton donor/acceptor. Position 128 (His128) interacts with (S)-2,3,4,5-tetrahydrodipicolinate. Position 131 (Lys131) interacts with NAD(+). Lys131 (proton donor) is an active-site residue. (S)-2,3,4,5-tetrahydrodipicolinate is bound at residue 137–138 (GT).

Belongs to the DapB family. As to quaternary structure, homotetramer.

Its subcellular location is the cytoplasm. The catalysed reaction is (S)-2,3,4,5-tetrahydrodipicolinate + NAD(+) + H2O = (2S,4S)-4-hydroxy-2,3,4,5-tetrahydrodipicolinate + NADH + H(+). It catalyses the reaction (S)-2,3,4,5-tetrahydrodipicolinate + NADP(+) + H2O = (2S,4S)-4-hydroxy-2,3,4,5-tetrahydrodipicolinate + NADPH + H(+). Its pathway is amino-acid biosynthesis; L-lysine biosynthesis via DAP pathway; (S)-tetrahydrodipicolinate from L-aspartate: step 4/4. With respect to regulation, is inhibited by high concentrations of NADH. Its function is as follows. Catalyzes the conversion of 4-hydroxy-tetrahydrodipicolinate (HTPA) to tetrahydrodipicolinate. Uses NADPH as a reductant with much more efficiency than NADH. The sequence is that of 4-hydroxy-tetrahydrodipicolinate reductase from Thermotoga maritima (strain ATCC 43589 / DSM 3109 / JCM 10099 / NBRC 100826 / MSB8).